Reading from the N-terminus, the 1433-residue chain is Pleckstrin homology domain-containing family H member 1 (1433 aa).

Residues Asn40 to Gln174 adopt a coiled-coil conformation. Disordered regions lie at residues Asp247–Pro346 and Ser552–Tyr634. The span at Pro252 to Lys266 shows a compositional bias: polar residues. A compositionally biased stretch (basic and acidic residues) spans Met279–Ser299. Positions Ser308 to Ser318 are enriched in low complexity. Over residues Thr332–Leu343 the composition is skewed to pro residues. Over residues Pro557 to Ser567 the composition is skewed to acidic residues. The segment covering Ser568 to Leu578 has biased composition (low complexity). The span at Val597–Ser606 shows a compositional bias: polar residues. PH domains lie at Thr643 to Lys737 and Lys751 to Gly859. The MyTH4 domain maps to Phe896–Leu1050. An FERM domain is found at Phe1061–Leu1392.

In terms of biological role, critical component of the guidance pathway underlying endothelial cell migration and blood vessel patterning. Involved in mediating membrane localization of ephrin proteins, which have been shown to provide guidance cues for endothelial cell migration. The protein is Pleckstrin homology domain-containing family H member 1 (plekhh1) of Danio rerio (Zebrafish).